A 159-amino-acid chain; its full sequence is MFNFINSLKNYSQESFRAARYIGQGFIVTLNHINRSAITVQYPYEKLITSERFRGRIHFEFDKCIVCEVCVRVCPINLPVVDWNFQQDIRKKKLKNYSIDFGVCIFCGNCVEYCPTNCLSMTEEYELSVYDRHELNYDQIALGRLPFNSFQDALVTKAS.

2 4Fe-4S ferredoxin-type domains span residues 55-84 (GRIH…VDWN) and 95-124 (KNYS…MTEE). 8 residues coordinate [4Fe-4S] cluster: C64, C67, C70, C74, C104, C107, C110, and C114.

The protein belongs to the complex I 23 kDa subunit family. NDH is composed of at least 16 different subunits, 5 of which are encoded in the nucleus. Requires [4Fe-4S] cluster as cofactor.

It localises to the plastid. The protein resides in the chloroplast thylakoid membrane. The enzyme catalyses a plastoquinone + NADH + (n+1) H(+)(in) = a plastoquinol + NAD(+) + n H(+)(out). It catalyses the reaction a plastoquinone + NADPH + (n+1) H(+)(in) = a plastoquinol + NADP(+) + n H(+)(out). In terms of biological role, NDH shuttles electrons from NAD(P)H:plastoquinone, via FMN and iron-sulfur (Fe-S) centers, to quinones in the photosynthetic chain and possibly in a chloroplast respiratory chain. The immediate electron acceptor for the enzyme in this species is believed to be plastoquinone. Couples the redox reaction to proton translocation, and thus conserves the redox energy in a proton gradient. In Chara vulgaris (Common stonewort), this protein is NAD(P)H-quinone oxidoreductase subunit I, chloroplastic.